Here is a 147-residue protein sequence, read N- to C-terminus: Phosphoribosyl-AMP cyclohydrolase (147 aa).

D91 serves as a coordination point for Mg(2+). C92 is a binding site for Zn(2+). Residues D93 and D95 each contribute to the Mg(2+) site. 2 residues coordinate Zn(2+): C108 and C115.

It belongs to the PRA-CH family. As to quaternary structure, homodimer. Mg(2+) is required as a cofactor. Zn(2+) serves as cofactor.

The protein resides in the cytoplasm. It catalyses the reaction 1-(5-phospho-beta-D-ribosyl)-5'-AMP + H2O = 1-(5-phospho-beta-D-ribosyl)-5-[(5-phospho-beta-D-ribosylamino)methylideneamino]imidazole-4-carboxamide. It functions in the pathway amino-acid biosynthesis; L-histidine biosynthesis; L-histidine from 5-phospho-alpha-D-ribose 1-diphosphate: step 3/9. Catalyzes the hydrolysis of the adenine ring of phosphoribosyl-AMP. The protein is Phosphoribosyl-AMP cyclohydrolase of Rhodopseudomonas palustris (strain BisB5).